The following is a 71-amino-acid chain: Protein SlyX homolog (71 aa).

The tract at residues 52-71 is disordered; it reads RLDQAESSAGAPANERPPHY.

The protein belongs to the SlyX family.

The protein is Protein SlyX homolog of Rhodopseudomonas palustris (strain ATCC BAA-98 / CGA009).